The chain runs to 531 residues: T-complex protein 1 subunit zeta (531 aa).

Ala2 is modified (N-acetylalanine). Lys5 is subject to N6-acetyllysine. Gly39 serves as a coordination point for ADP. Gly39 provides a ligand contact to ATP. Asp90 contacts Mg(2+). 6 residues coordinate ADP: Gly91, Thr92, Thr93, Ser94, Thr158, and Lys159. The ATP site is built by Gly91, Thr92, and Thr93. Residue Lys199 is modified to N6-acetyllysine. Position 205 is a phosphoserine (Ser205). A Glycyl lysine isopeptide (Lys-Gly) (interchain with G-Cter in SUMO2) cross-link involves residue Lys251. N6-acetyllysine occurs at positions 287, 365, 377, and 388. An ADP-binding site is contributed by Ala411. ATP is bound by residues Ala411, Gly412, Asp496, and Lys501. Residue Asp496 coordinates ADP.

The protein belongs to the TCP-1 chaperonin family. In terms of assembly, component of the chaperonin-containing T-complex (TRiC), a hexadecamer composed of two identical back-to-back stacked rings enclosing a protein folding chamber. Each ring is made up of eight different subunits: TCP1/CCT1, CCT2, CCT3, CCT4, CCT5, CCT6A/CCT6, CCT7, CCT8. Interacts with PACRG.

It localises to the cytoplasm. It carries out the reaction ATP + H2O = ADP + phosphate + H(+). Component of the chaperonin-containing T-complex (TRiC), a molecular chaperone complex that assists the folding of actin, tubulin and other proteins upon ATP hydrolysis. The TRiC complex mediates the folding of WRAP53/TCAB1, thereby regulating telomere maintenance. The chain is T-complex protein 1 subunit zeta (CCT6A) from Bos taurus (Bovine).